We begin with the raw amino-acid sequence, 419 residues long: Tetraspanning orphan receptor (419 aa).

At M1 to T28 the chain is on the cytoplasmic side. Residues I29–M49 traverse the membrane as a helical segment. Topologically, residues T50 to Y165 are extracellular. Residues I166–I186 traverse the membrane as a helical segment. Residues T187–L193 lie on the Cytoplasmic side of the membrane. A helical membrane pass occupies residues L194 to F214. The Extracellular portion of the chain corresponds to M215–T240. The chain crosses the membrane as a helical span at residues F241 to V261. At W262 to C419 the chain is on the cytoplasmic side. Low complexity predominate over residues N303–N316. The segment at N303–P328 is disordered.

In terms of assembly, interacts (via N-terminal extracellular domain) with human C2a. Phosphorylated on tyrosine residues.

Its subcellular location is the cell membrane. Functionally, cell surface receptor that binds to human complement C2a protein. This results in inhibition of the classical and lectin pathways of complement activation, probably due to interference with binding of C2a to C4b and interference with cleavage by C1 or MASP2 such that C3 convertase cannot be formed. This infers resistance to complement-mediated cell lysis, allowing parasite survival and infection. This chain is Tetraspanning orphan receptor, found in Schistosoma mansoni (Blood fluke).